A 223-amino-acid polypeptide reads, in one-letter code: MGQKVHPHGLRVGVIKEWDAKWYADKKNFADNLVEDHKIRNFVKKNSYAAGVSRIEIERAAKRIKLNIYTAKPGMIIGKGGQGIESLKNKLQKIVSNKNILINIVEVKRPEADAQLIAENIAQQLEKRIAFRRAMKQSIQRAMKSGVKGIKTACSGRLGGAEIARTEHYNEGTIPLQTLRADIDYGFAEADTTYGKIGVKVWVYKGEVLPARKNINEKEEANA.

The 70-residue stretch at 39–108 (IRNFVKKNSY…NILINIVEVK (70 aa)) folds into the KH type-2 domain.

The protein belongs to the universal ribosomal protein uS3 family. In terms of assembly, part of the 30S ribosomal subunit. Forms a tight complex with proteins S10 and S14.

In terms of biological role, binds the lower part of the 30S subunit head. Binds mRNA in the 70S ribosome, positioning it for translation. The polypeptide is Small ribosomal subunit protein uS3 (Clostridium botulinum (strain Okra / Type B1)).